The sequence spans 152 residues: SsrA-binding protein (152 aa).

It belongs to the SmpB family.

Its subcellular location is the cytoplasm. Its function is as follows. Required for rescue of stalled ribosomes mediated by trans-translation. Binds to transfer-messenger RNA (tmRNA), required for stable association of tmRNA with ribosomes. tmRNA and SmpB together mimic tRNA shape, replacing the anticodon stem-loop with SmpB. tmRNA is encoded by the ssrA gene; the 2 termini fold to resemble tRNA(Ala) and it encodes a 'tag peptide', a short internal open reading frame. During trans-translation Ala-aminoacylated tmRNA acts like a tRNA, entering the A-site of stalled ribosomes, displacing the stalled mRNA. The ribosome then switches to translate the ORF on the tmRNA; the nascent peptide is terminated with the 'tag peptide' encoded by the tmRNA and targeted for degradation. The ribosome is freed to recommence translation, which seems to be the essential function of trans-translation. The protein is SsrA-binding protein of Rickettsia peacockii (strain Rustic).